A 342-amino-acid polypeptide reads, in one-letter code: MTIQEELEAVKQQFSCDVSLAHSSKDLFDVKVKYLGKKGIFRGFADQLRKYPIEQKATVGASINACKQYVEEVLLERGKAVLAKEEAEEFLKEKIDISLPGSEEAALGGKHVIKKVLDDVVDIFVRFGFCVREAPNIESEKNNFSLLNFEEDHPARQMQDTFYLDPTTVLRTHTSNVQSRELARNKPPVRIVAPGECFRNEDVSARSHVIFHQVEAFCVDKDISFSDLTSMLAGFYHIFFGRKVELRFRHSYFPFVEPGIEVDISCECHGAGCSLCKHAGWLEVAGAGMIHPNVLRKASIDPEEYSGYALGMGIERLAMLKYGISDIRLFSENDLRFLRQFS.

Glu257 is a binding site for Mg(2+).

Belongs to the class-II aminoacyl-tRNA synthetase family. Phe-tRNA synthetase alpha subunit type 1 subfamily. In terms of assembly, tetramer of two alpha and two beta subunits. The cofactor is Mg(2+).

Its subcellular location is the cytoplasm. It carries out the reaction tRNA(Phe) + L-phenylalanine + ATP = L-phenylalanyl-tRNA(Phe) + AMP + diphosphate + H(+). The chain is Phenylalanine--tRNA ligase alpha subunit (pheS) from Chlamydia trachomatis serovar D (strain ATCC VR-885 / DSM 19411 / UW-3/Cx).